A 445-amino-acid polypeptide reads, in one-letter code: 3-phosphoshikimate 1-carboxyvinyltransferase (445 aa).

Residues K21, S22, and R26 each contribute to the 3-phosphoshikimate site. K21 lines the phosphoenolpyruvate pocket. Residues G92 and R120 each contribute to the phosphoenolpyruvate site. 4 residues coordinate 3-phosphoshikimate: S165, Q166, D307, and K334. Residue Q166 participates in phosphoenolpyruvate binding. Catalysis depends on D307, which acts as the Proton acceptor. Residues R338, R379, and K405 each contribute to the phosphoenolpyruvate site.

This sequence belongs to the EPSP synthase family. In terms of assembly, monomer.

It localises to the cytoplasm. It catalyses the reaction 3-phosphoshikimate + phosphoenolpyruvate = 5-O-(1-carboxyvinyl)-3-phosphoshikimate + phosphate. The protein operates within metabolic intermediate biosynthesis; chorismate biosynthesis; chorismate from D-erythrose 4-phosphate and phosphoenolpyruvate: step 6/7. In terms of biological role, catalyzes the transfer of the enolpyruvyl moiety of phosphoenolpyruvate (PEP) to the 5-hydroxyl of shikimate-3-phosphate (S3P) to produce enolpyruvyl shikimate-3-phosphate and inorganic phosphate. The sequence is that of 3-phosphoshikimate 1-carboxyvinyltransferase from Chlamydia pneumoniae (Chlamydophila pneumoniae).